A 1411-amino-acid polypeptide reads, in one-letter code: DNA-directed RNA polymerase subunit beta' (1411 aa).

The Zn(2+) site is built by Cys-70, Cys-72, Cys-85, and Cys-88. Mg(2+) is bound by residues Asp-458, Asp-460, and Asp-462. Residues Cys-813, Cys-887, Cys-894, and Cys-897 each contribute to the Zn(2+) site. A disordered region spans residues 1391–1411 (AQAEVPELDGSSVTASDAAAD).

It belongs to the RNA polymerase beta' chain family. As to quaternary structure, the RNAP catalytic core consists of 2 alpha, 1 beta, 1 beta' and 1 omega subunit. When a sigma factor is associated with the core the holoenzyme is formed, which can initiate transcription. It depends on Mg(2+) as a cofactor. The cofactor is Zn(2+).

It carries out the reaction RNA(n) + a ribonucleoside 5'-triphosphate = RNA(n+1) + diphosphate. DNA-dependent RNA polymerase catalyzes the transcription of DNA into RNA using the four ribonucleoside triphosphates as substrates. The sequence is that of DNA-directed RNA polymerase subunit beta' from Verminephrobacter eiseniae (strain EF01-2).